The following is a 1229-amino-acid chain: uncharacterized protein (1229 aa).

An N-terminal signal peptide occupies residues 1–19; sequence MKYFLLLFLLVLSFTLVES. Residues asparagine 238, asparagine 270, asparagine 370, asparagine 538, asparagine 691, and asparagine 701 are each glycosylated (N-linked (GlcNAc...) asparagine). A Galectin 1 domain is found at 678–813; the sequence is RMVNFANVME…QWNIDTVKMN (136 aa). Residues 818–829 are compositionally biased toward polar residues; it reads HTTTVEPSTPLE. The disordered stretch occupies residues 818–903; the sequence is HTTTVEPSTP…TLPPTTTPYN (86 aa). Positions 830 to 846 are enriched in low complexity; it reads TASTSQSTPSATLTSTT. A compositionally biased stretch (polar residues) spans 847–869; sequence ENIPSTSKIPETSTTQRPTSPIL. Residues 870–901 are compositionally biased toward low complexity; it reads TSGATSTSSSTESTTTSPTTSTTTTLPPTTTP. N-linked (GlcNAc...) asparagine glycosylation is found at asparagine 903, asparagine 938, and asparagine 948. Residues 925-1059 form the Galectin 2 domain; that stretch reads RPVVFSRYME…ESTIDTVSMA (135 aa). A disordered region spans residues 1061-1087; sequence VRPPTTPTTTTSTTTTTTPKLTTTSTL. The span at 1067–1087 shows a compositional bias: low complexity; it reads PTTTTSTTTTTTPKLTTTSTL. Asparagine 1146 carries an N-linked (GlcNAc...) asparagine glycan.

This is an uncharacterized protein from Caenorhabditis elegans.